Reading from the N-terminus, the 498-residue chain is Galactose-1-phosphate uridylyltransferase (498 aa).

The protein belongs to the galactose-1-phosphate uridylyltransferase type 2 family.

The protein resides in the cytoplasm. It carries out the reaction alpha-D-galactose 1-phosphate + UDP-alpha-D-glucose = alpha-D-glucose 1-phosphate + UDP-alpha-D-galactose. The protein operates within carbohydrate metabolism; galactose metabolism. In Staphylococcus carnosus (strain TM300), this protein is Galactose-1-phosphate uridylyltransferase.